Here is a 493-residue protein sequence, read N- to C-terminus: Probable cytosol aminopeptidase (493 aa).

Mn(2+)-binding residues include Lys-262 and Asp-267. Lys-274 is a catalytic residue. Mn(2+)-binding residues include Asp-285, Asp-344, and Glu-346. The active site involves Arg-348.

This sequence belongs to the peptidase M17 family. Mn(2+) is required as a cofactor.

It localises to the cytoplasm. It catalyses the reaction Release of an N-terminal amino acid, Xaa-|-Yaa-, in which Xaa is preferably Leu, but may be other amino acids including Pro although not Arg or Lys, and Yaa may be Pro. Amino acid amides and methyl esters are also readily hydrolyzed, but rates on arylamides are exceedingly low.. It carries out the reaction Release of an N-terminal amino acid, preferentially leucine, but not glutamic or aspartic acids.. Its function is as follows. Presumably involved in the processing and regular turnover of intracellular proteins. Catalyzes the removal of unsubstituted N-terminal amino acids from various peptides. This is Probable cytosol aminopeptidase from Xanthomonas campestris pv. campestris (strain 8004).